The sequence spans 92 residues: Small ribosomal subunit protein uS19 (92 aa).

Belongs to the universal ribosomal protein uS19 family.

In terms of biological role, protein S19 forms a complex with S13 that binds strongly to the 16S ribosomal RNA. This Brucella anthropi (strain ATCC 49188 / DSM 6882 / CCUG 24695 / JCM 21032 / LMG 3331 / NBRC 15819 / NCTC 12168 / Alc 37) (Ochrobactrum anthropi) protein is Small ribosomal subunit protein uS19.